A 454-amino-acid polypeptide reads, in one-letter code: Adenylosuccinate synthetase isozyme 1 B (454 aa).

Residues 1 to 24 (MSGTRASNDRSSHPGAGGHKRPRY) form a disordered region. GTP contacts are provided by residues 39-45 (GDEGKGK) and 67-69 (GHT). The active-site Proton acceptor is Asp-40. Positions 40 and 67 each coordinate Mg(2+). Asp-40 is a substrate binding site. IMP-binding positions include 40-43 (DEGK), 65-68 (NAGH), Thr-160, Arg-174, Asn-253, Thr-268, and Arg-332. His-68 acts as the Proton donor in catalysis. Residue 328–334 (VTTGRKR) coordinates substrate. Residues Arg-334, 360-362 (KLD), and 442-445 (GVGK) each bind GTP.

This sequence belongs to the adenylosuccinate synthetase family. In terms of assembly, homodimer. The cofactor is Mg(2+).

Its subcellular location is the cytoplasm. The catalysed reaction is IMP + L-aspartate + GTP = N(6)-(1,2-dicarboxyethyl)-AMP + GDP + phosphate + 2 H(+). Its pathway is purine metabolism; AMP biosynthesis via de novo pathway; AMP from IMP: step 1/2. Component of the purine nucleotide cycle (PNC), which interconverts IMP and AMP to regulate the nucleotide levels in various tissues, and which contributes to glycolysis and ammoniagenesis. Catalyzes the first committed step in the biosynthesis of AMP from IMP. In Xenopus laevis (African clawed frog), this protein is Adenylosuccinate synthetase isozyme 1 B (adss1-b).